The primary structure comprises 317 residues: Ribonuclease 3-like protein 2 (317 aa).

Residues 1–26 (MAPPPAMKPASRKRGPPAPDPVELPP) are disordered. The segment covering 16–26 (PPAPDPVELPP) has biased composition (pro residues). The region spanning 37 to 185 (AARVERLLRY…IAAAVYVDCK (149 aa)) is the RNase III domain. Residues Glu74, Asp171, and Glu174 each contribute to the Mg(2+) site. A DRBM domain is found at 211 to 274 (QPVTMLHELC…ARDATRKLAG (64 aa)).

Mg(2+) is required as a cofactor. Mn(2+) serves as cofactor.

In terms of biological role, cleaves double-stranded RNA (dsRNA). In Oryza sativa subsp. japonica (Rice), this protein is Ribonuclease 3-like protein 2.